A 600-amino-acid chain; its full sequence is UvrABC system protein C (600 aa).

Residues E15–V92 enclose the GIY-YIG domain. Residues Q197–T232 form the UVR domain.

It belongs to the UvrC family. In terms of assembly, interacts with UvrB in an incision complex.

It localises to the cytoplasm. Functionally, the UvrABC repair system catalyzes the recognition and processing of DNA lesions. UvrC both incises the 5' and 3' sides of the lesion. The N-terminal half is responsible for the 3' incision and the C-terminal half is responsible for the 5' incision. The polypeptide is UvrABC system protein C (Lactobacillus delbrueckii subsp. bulgaricus (strain ATCC BAA-365 / Lb-18)).